A 94-amino-acid chain; its full sequence is Integration host factor subunit beta (94 aa).

This sequence belongs to the bacterial histone-like protein family. In terms of assembly, heterodimer of an alpha and a beta chain.

In terms of biological role, this protein is one of the two subunits of integration host factor, a specific DNA-binding protein that functions in genetic recombination as well as in transcriptional and translational control. In Salmonella arizonae (strain ATCC BAA-731 / CDC346-86 / RSK2980), this protein is Integration host factor subunit beta.